Here is a 150-residue protein sequence, read N- to C-terminus: Putative HTH-type transcriptional regulator rrf2-like (150 aa).

Residues 1-139 (MITQKMKYAL…DSLTLEDMLA (139 aa)) form the HTH rrf2-type domain.

This Rhodobacter capsulatus (strain ATCC BAA-309 / NBRC 16581 / SB1003) protein is Putative HTH-type transcriptional regulator rrf2-like.